The primary structure comprises 272 residues: Large ribosomal subunit protein uL3 (272 aa).

A disordered region spans residues 125–146; sequence QHIGPKSHGGGGGSQPLRQTGS.

This sequence belongs to the universal ribosomal protein uL3 family. As to quaternary structure, part of the 50S ribosomal subunit. Forms a cluster with proteins L14 and L19.

Functionally, one of the primary rRNA binding proteins, it binds directly near the 3'-end of the 23S rRNA, where it nucleates assembly of the 50S subunit. The sequence is that of Large ribosomal subunit protein uL3 from Metamycoplasma arthritidis (strain 158L3-1) (Mycoplasma arthritidis).